The sequence spans 632 residues: tRNA uridine 5-carboxymethylaminomethyl modification enzyme MnmG (632 aa).

Position 13–18 (13–18 (GGGHAG)) interacts with FAD. 274-288 (GPRYCPSIEDKVMRF) lines the NAD(+) pocket.

It belongs to the MnmG family. Homodimer. Heterotetramer of two MnmE and two MnmG subunits. The cofactor is FAD.

It is found in the cytoplasm. In terms of biological role, NAD-binding protein involved in the addition of a carboxymethylaminomethyl (cmnm) group at the wobble position (U34) of certain tRNAs, forming tRNA-cmnm(5)s(2)U34. This is tRNA uridine 5-carboxymethylaminomethyl modification enzyme MnmG from Dichelobacter nodosus (strain VCS1703A).